Reading from the N-terminus, the 396-residue chain is Elongation factor Tu 2 (396 aa).

The 197-residue stretch at 10-206 (KPHVNVGTIG…AIDSYIPEPE (197 aa)) folds into the tr-type G domain. Residues 19 to 26 (GHIDHGKT) form a G1 region. 19–26 (GHIDHGKT) serves as a coordination point for GTP. Threonine 26 contacts Mg(2+). Residues 60-64 (GITIA) form a G2 region. A G3 region spans residues 81–84 (DCPG). GTP-binding positions include 81 to 85 (DCPGH) and 136 to 139 (NKCD). Residues 136 to 139 (NKCD) form a G4 region. The tract at residues 174-176 (SAL) is G5.

This sequence belongs to the TRAFAC class translation factor GTPase superfamily. Classic translation factor GTPase family. EF-Tu/EF-1A subfamily. In terms of assembly, monomer.

It localises to the cytoplasm. It carries out the reaction GTP + H2O = GDP + phosphate + H(+). Its function is as follows. GTP hydrolase that promotes the GTP-dependent binding of aminoacyl-tRNA to the A-site of ribosomes during protein biosynthesis. This Desulfotalea psychrophila (strain LSv54 / DSM 12343) protein is Elongation factor Tu 2.